An 81-amino-acid polypeptide reads, in one-letter code: High-potential iron-sulfur protein (81 aa).

[4Fe-4S] cluster-binding residues include Cys43, Cys46, Cys59, and Cys73.

It belongs to the high-potential iron-sulfur protein (HiPIP) family. In terms of assembly, homodimer.

Functionally, specific class of high-redox-potential 4Fe-4S ferredoxins. Functions in anaerobic electron transport in most purple and in some other photosynthetic bacteria and in at least one genus (Paracoccus) of halophilic, denitrifying bacteria. The chain is High-potential iron-sulfur protein (hip) from Thiococcus pfennigii (Thiocapsa pfennigii).